A 370-amino-acid chain; its full sequence is MTNVNVDVTPLTTKPSQDGFYMPAEWAAQQAVWMIWPYRPDNWRAAGAYAQATFAKVADAIGAATPVYMGVPKAFLAEAKAVMPSHVTLVEMDSNDCWARDTGPTVVVNDNGECRGVDWGFNAWGGHNGGLYFPWDKDEQVAQQMLAQHGFARYSAPLILEGGSIHVDGEGTCMTSAECLLNANRNPELTKEQIEDLLRDYLNVKQFIWLQDGVYMDETDGHIDNMSCFARPGEVILHWTDDETDPQYPRSKAALEVLQNTVDAKGRKLKIHLLPQPGPLYCSEEESKGVTEGTGVPRTAGERLAGSYVNFLITNHRIVFPLLDPATDDIAAQKLQEIFPEHEIVGVPAREILLGGGNIHCITQQIPAGK.

The Amidino-cysteine intermediate role is filled by cysteine 361.

Belongs to the agmatine deiminase family.

It catalyses the reaction agmatine + H2O = N-carbamoylputrescine + NH4(+). This Shewanella putrefaciens (strain CN-32 / ATCC BAA-453) protein is Putative agmatine deiminase.